Reading from the N-terminus, the 325-residue chain is MSETASWQPSASIPNLLKRAAIMAEIRRFFADRGVLEVETPCMSQATVTDIHLVPFETRFVGPGHSQGMNLWLMTSPEYHMKRLLVAGCGPVFQLCRSFRNEEMGRYHNPEFTMLEWYRPHYDMYRLMNEVDDLLQQVLDCPAAESLSYQQAFLRYLEIDPLSADKTQLREVAAKLDLSNVADTEEDRDTLLQLLFTFGVEPNIGKEKPTFVYHFPASQASLAQISTEDHRVAERFEVYYKGIELANGFHELTDAREQQQRFEQDNRKRAARGLPQHPIDQNLIEALKVGMPDCSGVALGVDRLVMLALGAETLAEVIAFSVDRA.

Residue 76–78 (SPE) participates in substrate binding. ATP-binding positions include 100–102 (RNE) and asparagine 109. Tyrosine 118 is a substrate binding site. An ATP-binding site is contributed by 244-245 (EL). Residue glutamate 251 coordinates substrate. An ATP-binding site is contributed by glycine 300.

This sequence belongs to the class-II aminoacyl-tRNA synthetase family. EpmA subfamily. In terms of assembly, homodimer.

The enzyme catalyses D-beta-lysine + L-lysyl-[protein] + ATP = N(6)-((3R)-3,6-diaminohexanoyl)-L-lysyl-[protein] + AMP + diphosphate + H(+). With EpmB is involved in the beta-lysylation step of the post-translational modification of translation elongation factor P (EF-P) on 'Lys-34'. Catalyzes the ATP-dependent activation of (R)-beta-lysine produced by EpmB, forming a lysyl-adenylate, from which the beta-lysyl moiety is then transferred to the epsilon-amino group of EF-P 'Lys-34'. In Escherichia coli O139:H28 (strain E24377A / ETEC), this protein is Elongation factor P--(R)-beta-lysine ligase.